The sequence spans 267 residues: Thiamine thiazole synthase (267 aa).

Residues Ser41, 60–61 (ER), Gly68, Val132, and 160–162 (HVD) each bind NAD(+). Positions 162 and 177 each coordinate Fe cation. Met227 contributes to the NAD(+) binding site. Arg237 serves as a coordination point for glycine.

The protein belongs to the THI4 family. In terms of assembly, homooctamer; tetramer of dimers. Fe(2+) is required as a cofactor.

It catalyses the reaction hydrogen sulfide + glycine + NAD(+) = ADP-5-ethyl-4-methylthiazole-2-carboxylate + nicotinamide + 3 H2O + H(+). The protein operates within cofactor biosynthesis; thiamine diphosphate biosynthesis. Functionally, involved in the biosynthesis of the thiazole moiety of thiamine. Catalyzes the conversion of NAD and glycine to adenosine diphosphate 5-(2-hydroxyethyl)-4-methylthiazole-2-carboxylate (ADT), an adenylated thiazole intermediate, using free sulfide as a source of sulfur. The polypeptide is Thiamine thiazole synthase (Saccharolobus islandicus (strain L.S.2.15 / Lassen #1) (Sulfolobus islandicus)).